A 689-amino-acid polypeptide reads, in one-letter code: MADLEAVLADVSYLMAMEKSKATPAARASKKILLPEPSIRSVMQKYLEDRGEVTFEKIFSQKLGYLLFREFCLNHMEEAKPLVEFYDEIKKYEKLDSEEERTVKSREIFDLYIMKELLSCSHLFSKSATEHVQSRLLKKQVPTDLFQPYIEEICQRFRDDVFQKFIESEKFTRFCQWKNVELNIHLTMNDFSVHRIIGRGGFGEVYGCRKADTGKMYAMKCLDKKRIKMKQGETLALNERIMLSLVSTGDCPFIVCMSYAFHTPDKLSFILDLMNGGDLHYHLSQHGVFSESDMRFYAAEIILGLEHMHSRFVVYRDLKPANILLDEFGHVRISDLGLACDFSKKKPHASVGTHGYMAPEVLQKGVAYDSSADWFSLGCMLFKLLRGHSPFRQHKTKDKHEIDRMTLTMAVELPDSFSPELRSLLEGLLQRDVNRSLGCLGRGAQEVKEDPFFKAVDWQMVLLQKYPPPLIPPRGEVNAADAFDIGSFDEEDTKGIKLLDSDQELYRNFPLTISERWQQEVAETVFDTVNSETDRLEARKKAKNKQLGHEDDYALGKDCIMHGYMSKMGNPFLTQWQRRYFYLFPNRLEWRAEGEAPQSLLTMEEIQSVEETQIKDRKCILLKIRGGKQFILQCDSDPELVQWKKELRDVYREAQQLLQRVPKMKNKPRSPVVELSKMPLTQRGSANGL.

An N-terminal region spans residues 1–190; sequence MADLEAVLAD…ELNIHLTMND (190 aa). One can recognise an RGS domain in the interval 54-175; sequence TFEKIFSQKL…IESEKFTRFC (122 aa). The region spanning 191–453 is the Protein kinase domain; sequence FSVHRIIGRG…AQEVKEDPFF (263 aa). Residues 197-205 and Lys220 each bind ATP; that span reads IGRGGFGEV. The active-site Proton acceptor is Asp317. The AGC-kinase C-terminal domain occupies 454–521; sequence KAVDWQMVLL…TISERWQQEV (68 aa). A PH domain is found at 558-652; it reads DCIMHGYMSK…WKKELRDVYR (95 aa). The disordered stretch occupies residues 665 to 689; it reads KNKPRSPVVELSKMPLTQRGSANGL. Ser670 carries the post-translational modification Phosphoserine.

It belongs to the protein kinase superfamily. AGC Ser/Thr protein kinase family. GPRK subfamily. As to quaternary structure, interacts with the heterodimer formed by GNB1 and GNG2. Interacts with GIT1. Interacts with, and phosphorylates chemokine-stimulated CCR5. Interacts with ARRB1. Interacts with LPAR1 and LPAR2. Interacts with RALA in response to LPAR1 activation. ADRBK1 and RALA mutually inhibit each other's binding to LPAR1. Interacts with ADRB2.

Its subcellular location is the cytoplasm. The protein resides in the cell membrane. It localises to the postsynapse. The protein localises to the presynapse. It catalyses the reaction [beta-adrenergic receptor] + ATP = [beta-adrenergic receptor]-phosphate + ADP + H(+). With respect to regulation, in contrast to other AGC family kinases, the catalytic activity is solely regulated by the binding of substrates and ligands, not by phosphorylation of the kinase domain. In terms of biological role, specifically phosphorylates the agonist-occupied form of the beta-adrenergic and closely related receptors, probably inducing a desensitization of them. Does not act on HTR1B/5-hydroxytryptamine 1B receptor. Key regulator of LPAR1 signaling. Competes with RALA for binding to LPAR1 thus affecting the signaling properties of the receptor. Desensitizes LPAR1 and LPAR2 in a phosphorylation-independent manner. Inhibits relaxation of airway smooth muscle in response to blue light. This Didelphis virginiana (North American opossum) protein is Beta-adrenergic receptor kinase 1.